The chain runs to 600 residues: ATP-dependent lipid A-core flippase (600 aa).

4 helical membrane passes run 26-46, 82-102, 167-187, and 266-286; these read VGIF…QPML, LLIV…NYFL, VFLF…MLAI, and PMLQ…VLFL. One can recognise an ABC transmembrane type-1 domain in the interval 30 to 321; that stretch reads LLSILGFVIF…LSEVSSTIQK (292 aa). Positions 353–589 constitute an ABC transporter domain; it reads LEVKNLSFFY…NGYYARLHAM (237 aa). 387–394 contacts ATP; the sequence is GRSGSGKS.

It belongs to the ABC transporter superfamily. Lipid exporter (TC 3.A.1.106) family. In terms of assembly, homodimer.

The protein localises to the cell inner membrane. The enzyme catalyses ATP + H2O + lipid A-core oligosaccharideSide 1 = ADP + phosphate + lipid A-core oligosaccharideSide 2.. Involved in lipopolysaccharide (LPS) biosynthesis. Translocates lipid A-core from the inner to the outer leaflet of the inner membrane. Transmembrane domains (TMD) form a pore in the inner membrane and the ATP-binding domain (NBD) is responsible for energy generation. This chain is ATP-dependent lipid A-core flippase, found in Pseudomonas syringae pv. tomato (strain ATCC BAA-871 / DC3000).